We begin with the raw amino-acid sequence, 88 residues long: UPF0297 protein EAT1b_2723 (88 aa).

It belongs to the UPF0297 family.

This is UPF0297 protein EAT1b_2723 from Exiguobacterium sp. (strain ATCC BAA-1283 / AT1b).